Consider the following 417-residue polypeptide: Serine hydroxymethyltransferase 1 (417 aa).

Residues Leu-121 and 125 to 127 (GHL) each bind (6S)-5,6,7,8-tetrahydrofolate. Lys-229 bears the N6-(pyridoxal phosphate)lysine mark. 355–357 (SPF) is a binding site for (6S)-5,6,7,8-tetrahydrofolate.

This sequence belongs to the SHMT family. In terms of assembly, homodimer. Pyridoxal 5'-phosphate serves as cofactor.

It localises to the cytoplasm. The catalysed reaction is (6R)-5,10-methylene-5,6,7,8-tetrahydrofolate + glycine + H2O = (6S)-5,6,7,8-tetrahydrofolate + L-serine. The protein operates within one-carbon metabolism; tetrahydrofolate interconversion. It functions in the pathway amino-acid biosynthesis; glycine biosynthesis; glycine from L-serine: step 1/1. In terms of biological role, catalyzes the reversible interconversion of serine and glycine with tetrahydrofolate (THF) serving as the one-carbon carrier. This reaction serves as the major source of one-carbon groups required for the biosynthesis of purines, thymidylate, methionine, and other important biomolecules. Also exhibits THF-independent aldolase activity toward beta-hydroxyamino acids, producing glycine and aldehydes, via a retro-aldol mechanism. The sequence is that of Serine hydroxymethyltransferase 1 from Pectobacterium atrosepticum (strain SCRI 1043 / ATCC BAA-672) (Erwinia carotovora subsp. atroseptica).